Here is a 477-residue protein sequence, read N- to C-terminus: Glycogen synthase (477 aa).

ADP-alpha-D-glucose is bound at residue Lys15.

The protein belongs to the glycosyltransferase 1 family. Bacterial/plant glycogen synthase subfamily.

The enzyme catalyses [(1-&gt;4)-alpha-D-glucosyl](n) + ADP-alpha-D-glucose = [(1-&gt;4)-alpha-D-glucosyl](n+1) + ADP + H(+). Its pathway is glycan biosynthesis; glycogen biosynthesis. In terms of biological role, synthesizes alpha-1,4-glucan chains using ADP-glucose. This is Glycogen synthase from Cronobacter sakazakii (strain ATCC BAA-894) (Enterobacter sakazakii).